The primary structure comprises 70 residues: Small ribosomal subunit protein bS21 (70 aa).

It belongs to the bacterial ribosomal protein bS21 family.

The polypeptide is Small ribosomal subunit protein bS21 (Campylobacter curvus (strain 525.92)).